The primary structure comprises 65 residues: UPF0434 protein PSHAa1659 (65 aa).

This sequence belongs to the UPF0434 family.

The sequence is that of UPF0434 protein PSHAa1659 from Pseudoalteromonas translucida (strain TAC 125).